A 308-amino-acid chain; its full sequence is Ribosomal protein L11 methyltransferase (308 aa).

S-adenosyl-L-methionine contacts are provided by Thr-148, Gly-169, Asp-191, and Asn-239.

It belongs to the methyltransferase superfamily. PrmA family.

Its subcellular location is the cytoplasm. The catalysed reaction is L-lysyl-[protein] + 3 S-adenosyl-L-methionine = N(6),N(6),N(6)-trimethyl-L-lysyl-[protein] + 3 S-adenosyl-L-homocysteine + 3 H(+). Methylates ribosomal protein L11. The polypeptide is Ribosomal protein L11 methyltransferase (Psychrobacter cryohalolentis (strain ATCC BAA-1226 / DSM 17306 / VKM B-2378 / K5)).